Consider the following 138-residue polypeptide: ATP synthase epsilon chain (138 aa).

The protein belongs to the ATPase epsilon chain family. As to quaternary structure, F-type ATPases have 2 components, CF(1) - the catalytic core - and CF(0) - the membrane proton channel. CF(1) has five subunits: alpha(3), beta(3), gamma(1), delta(1), epsilon(1). CF(0) has three main subunits: a, b and c.

The protein localises to the cell inner membrane. In terms of biological role, produces ATP from ADP in the presence of a proton gradient across the membrane. This Methylibium petroleiphilum (strain ATCC BAA-1232 / LMG 22953 / PM1) protein is ATP synthase epsilon chain.